Here is a 519-residue protein sequence, read N- to C-terminus: MEWKLERTAPRRVRTEEEMLWESIMRVLSKDLKQKRSQDSANVLDSVNATYSDFKSNFAKRLSAEVPVASSPITTRWQQSQTRALSSDSFGEEQSTTYLPEASGSVLKTPPEKETLTLGSRKEQLKTPSKGISETSNSALHFCKAPHAMDRDWKESVASKGQKCLKQLFVTQNVVQQANGKMQLCEQSECVWKGCKDGVRDESFHLKSSGDINDSILQPEVKIHITGLRNDYYLNILDWSFQNLVAIALGSAVYIWNGENHNGIENIDLSLTCNYISSVSWIKEGTCLAVGTSEGEVQLWDVVTKKRLRNMLGHLSVVGALSWNHFILSSGSRLGRVYHHDVRVAQHHVGTLRHKQAVCALKWSPDGRLLSSGCSDGLLTIWPHDPGASAQGQPLKVITQSTAVKAMDWCPWQSGVLAIGGGMKDGRLHILDINAGKSIQTPSTNSQICSLIWLPKTKEIATGQGTPKNDVTVWTCPTVSRSGGFFGHRGRVLHLSLSPDQTRVFSAAADGTASVWNCY.

Residues 79–98 show a composition bias toward polar residues; it reads QSQTRALSSDSFGEEQSTTY. The interval 79–133 is disordered; it reads QSQTRALSSDSFGEEQSTTYLPEASGSVLKTPPEKETLTLGSRKEQLKTPSKGIS. Basic and acidic residues predominate over residues 110–125; the sequence is PPEKETLTLGSRKEQL. 7 WD repeats span residues 229-266, 271-310, 311-341, 353-392, 399-441, 443-484, and 487-519; these read RNDY…GIEN, LTCN…RLRN, MLGH…YHHD, RHKQ…SAQG, TQST…SIQT, STNS…RSGG, and GHRG…WNCY.

This sequence belongs to the WD repeat CDC20/Fizzy family. In terms of tissue distribution, expressed in multiciliated cells (MCCs).

The protein localises to the cytoplasm. Functionally, protein regulator of centriole-deuterosome disengagement and subsequently participates in the ciliogenesis in multiciliated cells (MCCs). This is Cell division cycle protein 20 homolog B from Homo sapiens (Human).